Here is a 239-residue protein sequence, read N- to C-terminus: uncharacterized protein (239 aa).

The next 6 helical transmembrane spans lie at Val30–Ile50, Leu76–Ile96, Leu107–Ile127, Phe157–Leu177, Met188–Thr208, and Leu214–Leu234.

The protein belongs to the TatC family.

The protein resides in the plastid. It is found in the chloroplast membrane. This is an uncharacterized protein from Cyanidium caldarium (Red alga).